A 320-amino-acid polypeptide reads, in one-letter code: GTP 3',8-cyclase (320 aa).

Residues 5–225 (QFGRKINYLR…IQLIKKDEKA (221 aa)) form the Radical SAM core domain. Residue arginine 14 participates in GTP binding. [4Fe-4S] cluster-binding residues include cysteine 21 and cysteine 25. Residue tyrosine 27 coordinates S-adenosyl-L-methionine. Residue cysteine 28 participates in [4Fe-4S] cluster binding. Arginine 64 contacts GTP. Glycine 68 lines the S-adenosyl-L-methionine pocket. Threonine 95 is a GTP binding site. Serine 119 contacts S-adenosyl-L-methionine. Lysine 155 contributes to the GTP binding site. An S-adenosyl-L-methionine-binding site is contributed by methionine 189. The [4Fe-4S] cluster site is built by cysteine 248 and cysteine 251. 253–255 (RIR) is a GTP binding site. Cysteine 265 contacts [4Fe-4S] cluster.

The protein belongs to the radical SAM superfamily. MoaA family. Monomer and homodimer. [4Fe-4S] cluster serves as cofactor.

It catalyses the reaction GTP + AH2 + S-adenosyl-L-methionine = (8S)-3',8-cyclo-7,8-dihydroguanosine 5'-triphosphate + 5'-deoxyadenosine + L-methionine + A + H(+). Its pathway is cofactor biosynthesis; molybdopterin biosynthesis. Functionally, catalyzes the cyclization of GTP to (8S)-3',8-cyclo-7,8-dihydroguanosine 5'-triphosphate. The sequence is that of GTP 3',8-cyclase from Campylobacter jejuni (strain RM1221).